The sequence spans 156 residues: Homeobox-leucine zipper protein ATHB-52 (156 aa).

The homeobox DNA-binding region spans 8 to 67; it reads GKNKKKRLTQDQVRQLEKCFTMNKKLEPDLKLQLSNQLGLPQRQVAVWFQNKRARFKTQS. Residues 68 to 96 are leucine-zipper; the sequence is LEVQHCTLQSKHEAALSDKAKLEHQVQFL.

This sequence belongs to the HD-ZIP homeobox family. Class I subfamily. Expressed in roots and flowers.

The protein resides in the nucleus. Functionally, probable transcription factor. The polypeptide is Homeobox-leucine zipper protein ATHB-52 (ATHB-52) (Arabidopsis thaliana (Mouse-ear cress)).